We begin with the raw amino-acid sequence, 865 residues long: MVVSAGPWSSEKAEMNILEINEKLRPQLAENKQQFRNLKERCFLTQLAGFLANRQKKYKYEECKDLIKFMLRNERQFKEEKLAEQLKQAEELRQYKVLVHSQERELTQLREKLREGRDASRSLNEHLQALLTPDEPDKSQGQDLQEQLAEGCRLAQHLVQKLSPENDEDEDEDVQVEEDEKVLESSAPREVQKAEESKVPEDSLEECAITCSNSHGPCDSIQPHKNIKITFEEDKVNSSLVVDRESSHDGCQDALNILPVPGPTSSATNVSMVVSAGPLSSEKAEMNILEINEKLCPQLAEKKQQFRSLKEKCFVTQVACFLAKQQNKYKYEECKDLIKSMLRNERQFKEEKLAEQLKQAEELRQYKVLVHSQERELTQLREKLREGRDASRSLNEHLQALLTPDEPDKSQGQDLQEQLAEGCRLAQHLVQKLSPENDNDDDEDVQVEVAEKVQKSSSPREMQKAEEKEVPEDSLEECAITCSNSHGPYDSNQPHRKTKITFEEDKVDSTLIGSSSHVEWEDAVHIIPENESDDEEEEEKGPVSPRNLQESEEEEVPQESWDEGYSTLSIPPERLASYQSYSSTFHSLEEQQVCMAVDIGRHRWDQVKKEDQEATGPRLSRELLDEKEPEVLQDSLDRCYSTPSVYLGLTDSCQPYRSAFYVLEQQRIGLAVDMDEIEKYQEVEEDQDPSCPRLSRELLAEKEPEVLQDSLDRCYSTPSGYLELPDLGQPYRSAVYSLEEQYLGLALDVDRIKKDQEEEEDQGPPCPRLSRELLEVVEPEVLQDSLDVIQLLPVVLNSLTPASPTEVPFMHWRKNMLAFLLTWEKLKRRGRGRKEGEEDQRRKEEGEEKKGKKIKTHHAPGSAAC.

Residues 70–130 (MLRNERQFKE…RSLNEHLQAL (61 aa)) are a coiled coil. A disordered region spans residues 161–200 (KLSPENDEDEDEDVQVEEDEKVLESSAPREVQKAEESKVP). Over residues 165 to 181 (ENDEDEDEDVQVEEDEK) the composition is skewed to acidic residues. In terms of domain architecture, Olduvai 1 spans 165–259 (ENDEDEDEDV…GCQDALNILP (95 aa)). Basic and acidic residues predominate over residues 190–200 (EVQKAEESKVP). Residues 339–401 (KSMLRNERQF…RSLNEHLQAL (63 aa)) adopt a coiled-coil conformation. Olduvai domains are found at residues 436–528 (ENDN…HIIP), 529–617 (ENES…ATGP), 620–675 (SREL…VDMD), 676–767 (EIEK…PPCP), and 770–865 (SREL…SAAC). Disordered stretches follow at residues 450–475 (AEKV…EDSL) and 520–567 (WEDA…GYST). Acidic residues-rich tracts occupy residues 530–539 (NESDDEEEEE) and 550–562 (ESEE…ESWD). The tract at residues 829–865 (RGRGRKEGEEDQRRKEEGEEKKGKKIKTHHAPGSAAC) is disordered. A compositionally biased stretch (basic and acidic residues) spans 833-850 (RKEGEEDQRRKEEGEEKK).

It belongs to the NBPF family. In terms of tissue distribution, expressed in spinal cord.

The protein localises to the cytoplasm. This Homo sapiens (Human) protein is NBPF family member NBPF11.